Here is a 194-residue protein sequence, read N- to C-terminus: ATP synthase subunit delta (194 aa).

Belongs to the ATPase delta chain family. F-type ATPases have 2 components, F(1) - the catalytic core - and F(0) - the membrane proton channel. F(1) has five subunits: alpha(3), beta(3), gamma(1), delta(1), epsilon(1). F(0) has three main subunits: a(1), b(2) and c(10-14). The alpha and beta chains form an alternating ring which encloses part of the gamma chain. F(1) is attached to F(0) by a central stalk formed by the gamma and epsilon chains, while a peripheral stalk is formed by the delta and b chains.

Its subcellular location is the cell inner membrane. Its function is as follows. F(1)F(0) ATP synthase produces ATP from ADP in the presence of a proton or sodium gradient. F-type ATPases consist of two structural domains, F(1) containing the extramembraneous catalytic core and F(0) containing the membrane proton channel, linked together by a central stalk and a peripheral stalk. During catalysis, ATP synthesis in the catalytic domain of F(1) is coupled via a rotary mechanism of the central stalk subunits to proton translocation. This protein is part of the stalk that links CF(0) to CF(1). It either transmits conformational changes from CF(0) to CF(1) or is implicated in proton conduction. The sequence is that of ATP synthase subunit delta from Parvibaculum lavamentivorans (strain DS-1 / DSM 13023 / NCIMB 13966).